Here is a 319-residue protein sequence, read N- to C-terminus: Alpha-hemolysin (319 aa).

An N-terminal signal peptide occupies residues 1–26; it reads MKTRIVSSVTTTLLLGSILMNPVANA.

Belongs to the aerolysin family. Self-assembles to form first a non-lytic oligomeric intermediate and then, a mushroom-shaped homoheptamer structure of 100 Angstroms in length and up to 100 Angstroms in diameter.

The protein resides in the secreted. Functionally, alpha-toxin binds to the membrane of eukaryotic cells resulting in the release of low-molecular weight molecules and leading to an eventual osmotic lysis. Inhibits host neutrophil chemotaxis to the lesion region. Heptamer oligomerization and pore formation is required for lytic activity. In Staphylococcus aureus (strain NCTC 8325 / PS 47), this protein is Alpha-hemolysin (hly).